Reading from the N-terminus, the 133-residue chain is UPF0047 protein Rv2556c (133 aa).

This sequence belongs to the UPF0047 family.

The protein is UPF0047 protein Rv2556c of Mycobacterium tuberculosis (strain ATCC 25618 / H37Rv).